A 719-amino-acid chain; its full sequence is Aminodeoxychorismate synthase (719 aa).

Residues 5 to 199 (RTLLIDNYDS…RDLSLRAAGH (195 aa)) enclose the Glutamine amidotransferase type-1 domain. Catalysis depends on C86, which acts as the Nucleophile. Residues H173 and E175 contribute to the active site. A disordered region spans residues 199–224 (HRPPHTERIPAPAPAPAPAPAPAPPA). The span at 209–224 (APAPAPAPAPAPAPPA) shows a compositional bias: pro residues.

It in the C-terminal section; belongs to the anthranilate synthase component I family.

The catalysed reaction is chorismate + L-glutamine = 4-amino-4-deoxychorismate + L-glutamate. It participates in antibiotic biosynthesis. Functionally, involved in pristinamycin I biosynthesis. Catalyzes the biosynthesis of 4-amino-4-deoxychorismate (ADC) from chorismate and glutamine. The sequence is that of Aminodeoxychorismate synthase from Streptomyces pristinaespiralis.